Consider the following 230-residue polypeptide: Large ribosomal subunit protein uL4 (230 aa).

A disordered region spans residues 59–113 (RQGTHATKTRGEVSGGGKKPYRQKGTGRARQGSTRAPQFTGGGTVHGPQPRDYSQ).

Belongs to the universal ribosomal protein uL4 family. In terms of assembly, part of the 50S ribosomal subunit.

Functionally, one of the primary rRNA binding proteins, this protein initially binds near the 5'-end of the 23S rRNA. It is important during the early stages of 50S assembly. It makes multiple contacts with different domains of the 23S rRNA in the assembled 50S subunit and ribosome. Its function is as follows. Forms part of the polypeptide exit tunnel. The sequence is that of Large ribosomal subunit protein uL4 from Nocardia farcinica (strain IFM 10152).